Consider the following 741-residue polypeptide: Transketolase, chloroplastic (741 aa).

Residues 1–67 constitute a chloroplast transit peptide; the sequence is MASSSSLTLS…TKQQFSVRAS (67 aa). His-103 serves as a coordination point for substrate. Thiamine diphosphate is bound by residues His-143 and 192 to 194; that span reads GPL. Asp-233 lines the Mg(2+) pocket. Gly-234 and Asn-263 together coordinate thiamine diphosphate. Positions 263 and 265 each coordinate Mg(2+). The substrate site is built by His-340, Arg-434, and Ser-461. Thiamine diphosphate is bound at residue His-340. Residues Glu-488 and Phe-515 each coordinate thiamine diphosphate. Catalysis depends on Glu-488, which acts as the Proton donor. Residues His-539, Asp-547, and Arg-598 each coordinate substrate.

It belongs to the transketolase family. Homodimer. Mg(2+) is required as a cofactor. It depends on Ca(2+) as a cofactor. Mn(2+) serves as cofactor. The cofactor is Co(2+). Requires thiamine diphosphate as cofactor.

It is found in the plastid. Its subcellular location is the chloroplast thylakoid membrane. The catalysed reaction is D-sedoheptulose 7-phosphate + D-glyceraldehyde 3-phosphate = aldehydo-D-ribose 5-phosphate + D-xylulose 5-phosphate. Its pathway is carbohydrate biosynthesis; Calvin cycle. Its function is as follows. Catalyzes the reversible transfer of a two-carbon ketol group from fructose-6-phosphate or sedoheptulose-7-phosphate to glyceraldehyde-3-phosphate to yield xylulose-5-phosphate and erythrose-4-phosphate or ribose-5-phosphate, respectively. The chain is Transketolase, chloroplastic from Solanum tuberosum (Potato).